Here is a 201-residue protein sequence, read N- to C-terminus: Small ribosomal subunit protein uS2 (201 aa).

Belongs to the universal ribosomal protein uS2 family. In terms of assembly, part of the 50S ribosomal subunit.

The sequence is that of Small ribosomal subunit protein uS2 from Thermococcus kodakarensis (strain ATCC BAA-918 / JCM 12380 / KOD1) (Pyrococcus kodakaraensis (strain KOD1)).